Reading from the N-terminus, the 615-residue chain is Translation initiation factor IF-2 (615 aa).

In terms of domain architecture, tr-type G spans 118–285 (KRPPIVTVMG…AILTLAEINE (168 aa)). Residues 127-134 (GHVDHGKT) form a G1 region. 127–134 (GHVDHGKT) lines the GTP pocket. The interval 152–156 (GITQH) is G2. The interval 173 to 176 (DTPG) is G3. GTP contacts are provided by residues 173–177 (DTPGH) and 227–230 (NKMD). Residues 227 to 230 (NKMD) are G4. Positions 263–265 (SAI) are G5.

The protein belongs to the TRAFAC class translation factor GTPase superfamily. Classic translation factor GTPase family. IF-2 subfamily.

The protein localises to the cytoplasm. One of the essential components for the initiation of protein synthesis. Protects formylmethionyl-tRNA from spontaneous hydrolysis and promotes its binding to the 30S ribosomal subunits. Also involved in the hydrolysis of GTP during the formation of the 70S ribosomal complex. The protein is Translation initiation factor IF-2 of Mycoplasmoides gallisepticum (strain R(low / passage 15 / clone 2)) (Mycoplasma gallisepticum).